The chain runs to 615 residues: Proteasome-associated ATPase (615 aa).

The tract at residues 1–36 (MSESERPEAGDGTDALGASPDTPLSSEDAAELEQLR) is disordered. Positions 25 to 102 (SSEDAAELEQ…LREEVDRLGQ (78 aa)) form a coiled coil. 302-307 (GCGKTL) is a binding site for ATP. The tract at residues 614-615 (YL) is docks into pockets in the proteasome alpha-ring.

The protein belongs to the AAA ATPase family. In terms of assembly, homohexamer. Assembles into a hexameric ring structure that caps the 20S proteasome core. Strongly interacts with the prokaryotic ubiquitin-like protein Pup through a hydrophobic interface; the interacting region of ARC lies in its N-terminal coiled-coil domain. There is one Pup binding site per ARC hexamer ring. Upon ATP-binding, the C-terminus of ARC interacts with the alpha-rings of the proteasome core, possibly by binding to the intersubunit pockets.

The protein operates within protein degradation; proteasomal Pup-dependent pathway. Its function is as follows. ATPase which is responsible for recognizing, binding, unfolding and translocation of pupylated proteins into the bacterial 20S proteasome core particle. May be essential for opening the gate of the 20S proteasome via an interaction with its C-terminus, thereby allowing substrate entry and access to the site of proteolysis. Thus, the C-termini of the proteasomal ATPase may function like a 'key in a lock' to induce gate opening and therefore regulate proteolysis. This Mycolicibacterium gilvum (strain PYR-GCK) (Mycobacterium gilvum (strain PYR-GCK)) protein is Proteasome-associated ATPase.